The following is a 416-amino-acid chain: Multifunctional CCA protein (416 aa).

The ATP site is built by Gly8 and Arg11. The CTP site is built by Gly8 and Arg11. The Mg(2+) site is built by Asp21 and Asp23. 3 residues coordinate ATP: Arg91, Arg138, and Arg141. Residues Arg91, Arg138, and Arg141 each coordinate CTP. One can recognise an HD domain in the interval 229–331 (TGLHQELVSD…YELLQRCDAF (103 aa)).

It belongs to the tRNA nucleotidyltransferase/poly(A) polymerase family. Bacterial CCA-adding enzyme type 1 subfamily. Monomer. Can also form homodimers and oligomers. It depends on Mg(2+) as a cofactor. Ni(2+) is required as a cofactor.

The enzyme catalyses a tRNA precursor + 2 CTP + ATP = a tRNA with a 3' CCA end + 3 diphosphate. The catalysed reaction is a tRNA with a 3' CCA end + 2 CTP + ATP = a tRNA with a 3' CCACCA end + 3 diphosphate. Functionally, catalyzes the addition and repair of the essential 3'-terminal CCA sequence in tRNAs without using a nucleic acid template. Adds these three nucleotides in the order of C, C, and A to the tRNA nucleotide-73, using CTP and ATP as substrates and producing inorganic pyrophosphate. tRNA 3'-terminal CCA addition is required both for tRNA processing and repair. Also involved in tRNA surveillance by mediating tandem CCA addition to generate a CCACCA at the 3' terminus of unstable tRNAs. While stable tRNAs receive only 3'-terminal CCA, unstable tRNAs are marked with CCACCA and rapidly degraded. This is Multifunctional CCA protein from Xylella fastidiosa (strain M23).